A 432-amino-acid chain; its full sequence is 3-phosphoshikimate 1-carboxyvinyltransferase (432 aa).

3 residues coordinate 3-phosphoshikimate: Lys-22, Ser-23, and Arg-27. Lys-22 contacts phosphoenolpyruvate. Phosphoenolpyruvate contacts are provided by Gly-96 and Arg-127. Ser-173, Ser-174, Gln-175, Ser-201, Asp-316, Asn-339, and Lys-343 together coordinate 3-phosphoshikimate. Gln-175 serves as a coordination point for phosphoenolpyruvate. Asp-316 acts as the Proton acceptor in catalysis. Residues Arg-347, Arg-391, and Lys-416 each coordinate phosphoenolpyruvate.

Belongs to the EPSP synthase family. Monomer.

It is found in the cytoplasm. It catalyses the reaction 3-phosphoshikimate + phosphoenolpyruvate = 5-O-(1-carboxyvinyl)-3-phosphoshikimate + phosphate. The protein operates within metabolic intermediate biosynthesis; chorismate biosynthesis; chorismate from D-erythrose 4-phosphate and phosphoenolpyruvate: step 6/7. In terms of biological role, catalyzes the transfer of the enolpyruvyl moiety of phosphoenolpyruvate (PEP) to the 5-hydroxyl of shikimate-3-phosphate (S3P) to produce enolpyruvyl shikimate-3-phosphate and inorganic phosphate. The sequence is that of 3-phosphoshikimate 1-carboxyvinyltransferase from Histophilus somni (strain 2336) (Haemophilus somnus).